Here is a 226-residue protein sequence, read N- to C-terminus: RNA pyrophosphohydrolase (226 aa).

The 144-residue stretch at 6–149 (GFRPNVGIIL…KRGVYEMALT (144 aa)) folds into the Nudix hydrolase domain. A Nudix box motif is present at residues 38–59 (GGIDRGETPEQAMFRELHEEVG). The interval 197–226 (MELPPGASFDPDPRTGDGDPGMPGIHKPAG) is disordered.

This sequence belongs to the Nudix hydrolase family. RppH subfamily. The cofactor is a divalent metal cation.

Accelerates the degradation of transcripts by removing pyrophosphate from the 5'-end of triphosphorylated RNA, leading to a more labile monophosphorylated state that can stimulate subsequent ribonuclease cleavage. This Paracidovorax citrulli (strain AAC00-1) (Acidovorax citrulli) protein is RNA pyrophosphohydrolase.